Consider the following 194-residue polypeptide: Probable GTP-binding protein EngB (194 aa).

The EngB-type G domain maps to 22 to 194 (LFLEVAFAGR…WQELDTMLNP (173 aa)). Residues 30–37 (GRSNVGKS), 57–61 (GCTQL), 75–78 (DLPG), 142–145 (TKAD), and 173–175 (FSS) contribute to the GTP site. Mg(2+) contacts are provided by Ser37 and Thr59.

Belongs to the TRAFAC class TrmE-Era-EngA-EngB-Septin-like GTPase superfamily. EngB GTPase family. The cofactor is Mg(2+).

Its function is as follows. Necessary for normal cell division and for the maintenance of normal septation. This is Probable GTP-binding protein EngB from Desulforapulum autotrophicum (strain ATCC 43914 / DSM 3382 / VKM B-1955 / HRM2) (Desulfobacterium autotrophicum).